The sequence spans 211 residues: MNMIRFITIPDFADYQVTLKLMEDYVNKVISDHEPEIIYLVEHSEVYTAGTNYKQEELLNYGDIPVIYTGRGGKFTFHGPGQRVIYPILNLASPNRHKDLKLYIKMLEEWIINSLNYFGIKAYIIKDKVGIWAKVRKDEFAKIAAIGVRVRKWVTYHGVAINISTDLSKFSGIIPCGLENSLITSLNQLGIHVEMSEFDKIIQTEFNKIFK.

The 180-residue stretch at 32 to 211 (DHEPEIIYLV…IQTEFNKIFK (180 aa)) folds into the BPL/LPL catalytic domain. Substrate-binding positions include 71–78 (RGGKFTFH), 145–147 (AIG), and 158–160 (GVA). C176 (acyl-thioester intermediate) is an active-site residue.

The protein belongs to the LipB family.

It localises to the cytoplasm. The enzyme catalyses octanoyl-[ACP] + L-lysyl-[protein] = N(6)-octanoyl-L-lysyl-[protein] + holo-[ACP] + H(+). It functions in the pathway protein modification; protein lipoylation via endogenous pathway; protein N(6)-(lipoyl)lysine from octanoyl-[acyl-carrier-protein]: step 1/2. Its function is as follows. Catalyzes the transfer of endogenously produced octanoic acid from octanoyl-acyl-carrier-protein onto the lipoyl domains of lipoate-dependent enzymes. Lipoyl-ACP can also act as a substrate although octanoyl-ACP is likely to be the physiological substrate. This is Octanoyltransferase from Rickettsia massiliae (strain Mtu5).